The primary structure comprises 288 residues: RanBP2-type zinc finger protein At1g67325 (288 aa).

Residues 1-11 (MSQVDNRNSSA) show a composition bias toward polar residues. 5 disordered regions span residues 1–24 (MSQVDNRNSSAAKRARTDGGRRED), 52–77 (PADHNGKSAPKPMQHQQGFSSPGAYL), 176–198 (MPRPRFYPDEKSQKRDSTRDNDW), 222–248 (PKPGSQQGGSSDKISKQNAPEGSWKCD), and 265–288 (NCGADKPGDRSNGSPSRAPEENDQ). Residues 15–24 (ARTDGGRRED) are compositionally biased toward basic and acidic residues. 3 consecutive RanBP2-type zinc fingers follow at residues 22–53 (REDDWICPSCGNVNFSFRTTCNMRNCTQPRPA), 194–225 (RDNDWTCPNCGNVNFSFRTVCNMRKCNTPKPG), and 241–272 (PEGSWKCDNCGNINYPFRSKCNRQNCGADKPG). Basic and acidic residues predominate over residues 181-197 (FYPDEKSQKRDSTRDND). Positions 223 to 241 (KPGSQQGGSSDKISKQNAP) are enriched in polar residues. Serine 278 is modified (phosphoserine).

This is RanBP2-type zinc finger protein At1g67325 from Arabidopsis thaliana (Mouse-ear cress).